The following is a 489-amino-acid chain: Betaine aldehyde dehydrogenase (489 aa).

2 residues coordinate K(+): T26 and D93. G150 to W152 lines the NAD(+) pocket. K162 acts as the Charge relay system in catalysis. K176–E179 is a binding site for NAD(+). Position 180 (I180) interacts with K(+). Position 229–232 (G229–T232) interacts with NAD(+). L245 is a K(+) binding site. The Proton acceptor role is filled by E251. 3 residues coordinate NAD(+): G253, C285, and E386. The active-site Nucleophile is C285. Residue C285 is modified to Cysteine sulfenic acid (-SOH). Residues K456 and G459 each coordinate K(+). The Charge relay system role is filled by E463.

It belongs to the aldehyde dehydrogenase family. As to quaternary structure, dimer of dimers. K(+) serves as cofactor.

It carries out the reaction betaine aldehyde + NAD(+) + H2O = glycine betaine + NADH + 2 H(+). It functions in the pathway amine and polyamine biosynthesis; betaine biosynthesis via choline pathway; betaine from betaine aldehyde: step 1/1. Involved in the biosynthesis of the osmoprotectant glycine betaine. Catalyzes the irreversible oxidation of betaine aldehyde to the corresponding acid. This chain is Betaine aldehyde dehydrogenase, found in Paraburkholderia phytofirmans (strain DSM 17436 / LMG 22146 / PsJN) (Burkholderia phytofirmans).